The chain runs to 136 residues: Protein NrdI (136 aa).

The protein belongs to the NrdI family.

In terms of biological role, probably involved in ribonucleotide reductase function. The sequence is that of Protein NrdI from Escherichia coli O1:K1 / APEC.